Reading from the N-terminus, the 327-residue chain is Interleukin-12 subunit beta (327 aa).

Residues M1–A22 form the signal peptide. An Ig-like C2-type domain is found at I23–K106. C50 and C90 are disulfide-bonded. N223 carries N-linked (GlcNAc...) asparagine glycosylation. A Fibronectin type-III domain is found at P238–S327.

The protein belongs to the IL-12B family. Heterodimer with IL12A; disulfide-linked. The heterodimer is known as interleukin IL-12. Heterodimer with IL23A; disulfide-linked. The heterodimer is known as interleukin IL-23. Also secreted as a monomer. Interacts with NBR1; this interaction promotes IL-12 secretion.

It localises to the secreted. Cytokine that can act as a growth factor for activated T and NK cells, enhance the lytic activity of NK/lymphokine-activated killer cells, and stimulate the production of IFN-gamma by resting PBMC. Functionally, associates with IL23A to form the IL-23 interleukin, a heterodimeric cytokine which functions in innate and adaptive immunity. IL-23 may constitute with IL-17 an acute response to infection in peripheral tissues. IL-23 binds to a heterodimeric receptor complex composed of IL12RB1 and IL23R, activates the Jak-Stat signaling cascade, stimulates memory rather than naive T-cells and promotes production of pro-inflammatory cytokines. IL-23 induces autoimmune inflammation and thus may be responsible for autoimmune inflammatory diseases and may be important for tumorigenesis. The sequence is that of Interleukin-12 subunit beta (IL12B) from Cervus elaphus (Red deer).